We begin with the raw amino-acid sequence, 432 residues long: Glutamyl-tRNA reductase (432 aa).

Substrate contacts are provided by residues 55-58, Ser-114, 119-121, and Gln-125; these read TCNR and ETQ. Cys-56 serves as the catalytic Nucleophile. 194–199 serves as a coordination point for NADP(+); that stretch reads GAGEMI.

The protein belongs to the glutamyl-tRNA reductase family. As to quaternary structure, homodimer.

The enzyme catalyses (S)-4-amino-5-oxopentanoate + tRNA(Glu) + NADP(+) = L-glutamyl-tRNA(Glu) + NADPH + H(+). It functions in the pathway porphyrin-containing compound metabolism; protoporphyrin-IX biosynthesis; 5-aminolevulinate from L-glutamyl-tRNA(Glu): step 1/2. Functionally, catalyzes the NADPH-dependent reduction of glutamyl-tRNA(Glu) to glutamate 1-semialdehyde (GSA). The protein is Glutamyl-tRNA reductase of Burkholderia orbicola (strain AU 1054).